Reading from the N-terminus, the 274-residue chain is Diaminopimelate epimerase (274 aa).

Substrate-binding residues include asparagine 11, glutamine 44, and asparagine 64. Catalysis depends on cysteine 73, which acts as the Proton donor. Residues 74-75 (GN), asparagine 157, asparagine 190, and 208-209 (ER) contribute to the substrate site. Residue cysteine 217 is the Proton acceptor of the active site. 218 to 219 (GS) provides a ligand contact to substrate.

It belongs to the diaminopimelate epimerase family. As to quaternary structure, homodimer.

It localises to the cytoplasm. The enzyme catalyses (2S,6S)-2,6-diaminopimelate = meso-2,6-diaminopimelate. The protein operates within amino-acid biosynthesis; L-lysine biosynthesis via DAP pathway; DL-2,6-diaminopimelate from LL-2,6-diaminopimelate: step 1/1. Its function is as follows. Catalyzes the stereoinversion of LL-2,6-diaminopimelate (L,L-DAP) to meso-diaminopimelate (meso-DAP), a precursor of L-lysine and an essential component of the bacterial peptidoglycan. The chain is Diaminopimelate epimerase from Histophilus somni (strain 129Pt) (Haemophilus somnus).